A 161-amino-acid polypeptide reads, in one-letter code: Cell division control protein 31 (161 aa).

4 EF-hand domains span residues 20–55 (EQKQEIYEAFSLFDMNNDGFLDYHELKVAMKALGFE), 56–91 (LPKREILDLIDEYDSEGRHLMKYDDFYIVMGEKILK), 93–128 (DPLDEIKRAFQLFDDDHTGKISIKNLRRVAKELGET), and 129–161 (LTDEELRAMIEEFDLDGDGEINENEFIAICTDS). 4 residues coordinate Ca(2+): Asp-33, Asn-35, Asp-37, and Glu-44. Thr-130 carries the post-translational modification Phosphothreonine. Residues Asp-142, Asp-144, Asp-146, Glu-148, and Glu-153 each coordinate Ca(2+).

This sequence belongs to the centrin family. Component of the spindle pole body (SPB), acting as the connector of microtubule arrays in the cytoplasm and the nucleoplasm, is involved in nuclear positioning before chromosome segregation, SPB separation, spindle formation, chromosome segregation, nuclear migration into the bud, nuclear reorientation after cytokinesis and nuclear fusion during conjugation. The SPB half-bridge, which is tightly associated with the cytoplasmic side of the nuclear envelope and the SPB, is playing a key role as the starting structure for and in the initiation of SPB duplication in G1. At the SPB half-bridge CDC31 interacts with KAR1, MPS3 and SFI1. Interacts with KIC1. Interacts with VPS13. Associates with nuclear pore complexes (NPCs).

The protein localises to the nucleus envelope. It localises to the cytoplasm. It is found in the cytoskeleton. The protein resides in the microtubule organizing center. Its subcellular location is the spindle pole body. Functions as a component of the spindle pole body (SPB) half-bridge. At the SPB, it is recruited by KAR1 and MPS3 to the SPB half-bridge and involved in the initial steps of SPB duplication. Also involved in connection with the protein kinase KIC1 in the maintenance of cell morphology and integrity. May play a role in vesicle-mediated transport, in a VPS13-dependent manner. This Saccharomyces cerevisiae (strain ATCC 204508 / S288c) (Baker's yeast) protein is Cell division control protein 31 (CDC31).